Here is a 291-residue protein sequence, read N- to C-terminus: Phosphate import ATP-binding protein PstB (291 aa).

Residues 1-21 (MANKQIIDKNDDLQAHTDRND) are disordered. An ABC transporter domain is found at 45 to 286 (YSTKNLDLWY…PSDKQTEDYI (242 aa)). 77 to 84 (GPSGCGKS) serves as a coordination point for ATP.

This sequence belongs to the ABC transporter superfamily. Phosphate importer (TC 3.A.1.7) family. As to quaternary structure, the complex is composed of two ATP-binding proteins (PstB), two transmembrane proteins (PstC and PstA) and a solute-binding protein (PstS).

The protein localises to the cell membrane. It catalyses the reaction phosphate(out) + ATP + H2O = ADP + 2 phosphate(in) + H(+). In terms of biological role, part of the ABC transporter complex PstSACB involved in phosphate import. Responsible for energy coupling to the transport system. The protein is Phosphate import ATP-binding protein PstB of Staphylococcus saprophyticus subsp. saprophyticus (strain ATCC 15305 / DSM 20229 / NCIMB 8711 / NCTC 7292 / S-41).